The following is a 196-amino-acid chain: Probable malonic semialdehyde reductase RutE (196 aa).

It belongs to the nitroreductase family. HadB/RutE subfamily. The cofactor is FMN.

The catalysed reaction is 3-hydroxypropanoate + NADP(+) = 3-oxopropanoate + NADPH + H(+). Functionally, may reduce toxic product malonic semialdehyde to 3-hydroxypropionic acid, which is excreted. The sequence is that of Probable malonic semialdehyde reductase RutE from Cronobacter sakazakii (strain ATCC BAA-894) (Enterobacter sakazakii).